The chain runs to 199 residues: NAD(P)H dehydrogenase (quinone) (199 aa).

In terms of domain architecture, Flavodoxin-like spans 4–190 (VLVLYYSAYG…DGARYQGRKI (187 aa)). FMN is bound by residues 10-15 (SAYGHI) and 78-80 (TRF). Residue Y12 coordinates NAD(+). Position 98 (W98) interacts with substrate. Residues 113–119 (STATQHG) and H134 each bind FMN.

The protein belongs to the WrbA family. FMN serves as cofactor.

It catalyses the reaction a quinone + NADH + H(+) = a quinol + NAD(+). The catalysed reaction is a quinone + NADPH + H(+) = a quinol + NADP(+). The protein is NAD(P)H dehydrogenase (quinone) of Xanthobacter autotrophicus (strain ATCC BAA-1158 / Py2).